A 214-amino-acid chain; its full sequence is Orotate phosphoribosyltransferase (214 aa).

Lys-26 contacts 5-phospho-alpha-D-ribose 1-diphosphate. 34–35 (FF) lines the orotate pocket. 5-phospho-alpha-D-ribose 1-diphosphate contacts are provided by residues 72–73 (YK), Arg-99, Lys-100, Lys-103, His-105, and 124–132 (DDVITAGTA). Residues Thr-128 and Arg-156 each coordinate orotate.

It belongs to the purine/pyrimidine phosphoribosyltransferase family. PyrE subfamily. As to quaternary structure, homodimer. The cofactor is Mg(2+).

The catalysed reaction is orotidine 5'-phosphate + diphosphate = orotate + 5-phospho-alpha-D-ribose 1-diphosphate. It participates in pyrimidine metabolism; UMP biosynthesis via de novo pathway; UMP from orotate: step 1/2. In terms of biological role, catalyzes the transfer of a ribosyl phosphate group from 5-phosphoribose 1-diphosphate to orotate, leading to the formation of orotidine monophosphate (OMP). This is Orotate phosphoribosyltransferase from Mannheimia succiniciproducens (strain KCTC 0769BP / MBEL55E).